Consider the following 443-residue polypeptide: Protein AknT (443 aa).

This sequence belongs to the cytochrome P450 family.

Functionally, involved in the biosynthesis of the anthracycline antitumor agent aclacinomycin A. AknT is required for the glycosylation of aklavinone aglycone by AknS to yield aclacinomycin T (rhodosaminyl-aklavinone). This chain is Protein AknT, found in Streptomyces galilaeus.